The primary structure comprises 444 residues: Structure-specific endonuclease subunit SLX1 (444 aa).

One can recognise a GIY-YIG domain in the interval 23–105 (AFSCCYLLRS…QNTKVSRHAD (83 aa)). The SLX1-type zinc-finger motif lies at 240–295 (CGVCKQRLILQHDIIAVCSHSSCHCAAHLSCLSSHFLKDKDSDSELVPREGTCPTC). A disordered region spans residues 324–354 (RRQRAGTPKGQGLKSVRGRGHSEDENESDAL).

This sequence belongs to the SLX1 family. In terms of assembly, forms a heterodimer with SLX4. Requires a divalent metal cation as cofactor.

It localises to the nucleus. Functionally, catalytic subunit of the SLX1-SLX4 structure-specific endonuclease that resolves DNA secondary structures generated during DNA repair and recombination. Has endonuclease activity towards branched DNA substrates, introducing single-strand cuts in duplex DNA close to junctions with ss-DNA. The sequence is that of Structure-specific endonuclease subunit SLX1 from Paracoccidioides lutzii (strain ATCC MYA-826 / Pb01) (Paracoccidioides brasiliensis).